The sequence spans 444 residues: DNA repair protein RadA (444 aa).

Residues 8–25 (CSNCGNISPKWSGQCFDC) form a C4-type zinc finger. 89–96 (GDPGIGKS) is a binding site for ATP. Positions 248 to 252 (KNRFG) match the RadA KNRFG motif motif. The interval 347 to 444 (EVYLSIAGGL…HLKDLKEIIK (98 aa)) is lon-protease-like.

It belongs to the RecA family. RadA subfamily.

Functionally, DNA-dependent ATPase involved in processing of recombination intermediates, plays a role in repairing DNA breaks. Stimulates the branch migration of RecA-mediated strand transfer reactions, allowing the 3' invading strand to extend heteroduplex DNA faster. Binds ssDNA in the presence of ADP but not other nucleotides, has ATPase activity that is stimulated by ssDNA and various branched DNA structures, but inhibited by SSB. Does not have RecA's homology-searching function. The chain is DNA repair protein RadA from Rickettsia conorii (strain ATCC VR-613 / Malish 7).